We begin with the raw amino-acid sequence, 341 residues long: GDP-fucose transporter 1 (341 aa).

10 consecutive transmembrane segments (helical) span residues 17–37 (LVIGYALCSSLLAVINKLAIT), 41–61 (YPGLLTALQYLTCTVAVYLLG), 71–91 (FTWDTAKKFLPAAIVFYLAIF), 103–123 (DTFIVFRSLTPLLVAIADTVF), 132–152 (LTFLSLVVILAGAVGYVATDS), 156–176 (LTAYSWALAYLVTITTEMVYI), 187–207 (IWGLVLYNNLLSLMIAPVFWF), 231–251 (AFSSVAASCVFGFLISYFGFA), 260–280 (AFTVTGVVNKFLTVVINVLIW), and 283–303 (HATPVGLVCLLFTICGGVGYQ). Residues 316–341 (SEKDSEKGEEDEELTQLVPGKLASVV) are disordered.

The protein belongs to the nucleotide-sugar transporter family. GDP-Mannose:GMP antiporter (GMA) (TC 2.A.7.13) subfamily. Ubiquitous.

The protein resides in the golgi apparatus membrane. In terms of biological role, acts as the major nucleotide-sugar transporter for the import of GDP-Fucose into the Golgi lumen. Transports GDP-Fucose in a strict counter-exchange mode. Is required for proper plant growth and development. Also acts as a GDP-mannose transporter that may be involved in the import of GDP-mannose from the cytoplasm into the Golgi lumen. This chain is GDP-fucose transporter 1, found in Arabidopsis thaliana (Mouse-ear cress).